The following is a 603-amino-acid chain: Elongation factor 4 (603 aa).

In terms of domain architecture, tr-type G spans 5 to 187; that stretch reads RHIRNFCIIA…AVVNFVPPPK (183 aa). Residues 17 to 22 and 134 to 137 contribute to the GTP site; these read DHGKST and NKID.

This sequence belongs to the TRAFAC class translation factor GTPase superfamily. Classic translation factor GTPase family. LepA subfamily.

It is found in the cell membrane. It catalyses the reaction GTP + H2O = GDP + phosphate + H(+). Its function is as follows. Required for accurate and efficient protein synthesis under certain stress conditions. May act as a fidelity factor of the translation reaction, by catalyzing a one-codon backward translocation of tRNAs on improperly translocated ribosomes. Back-translocation proceeds from a post-translocation (POST) complex to a pre-translocation (PRE) complex, thus giving elongation factor G a second chance to translocate the tRNAs correctly. Binds to ribosomes in a GTP-dependent manner. This chain is Elongation factor 4, found in Symbiobacterium thermophilum (strain DSM 24528 / JCM 14929 / IAM 14863 / T).